The sequence spans 401 residues: Argininosuccinate synthase (401 aa).

Residue 8-16 (AYSGGLDTS) coordinates ATP. Tyr85 serves as a coordination point for L-citrulline. An ATP-binding site is contributed by Gly115. L-aspartate is bound by residues Thr117, Asn121, and Asp122. Asn121 lines the L-citrulline pocket. Residues Arg125, Ser173, Ser182, Glu258, and Tyr270 each contribute to the L-citrulline site.

The protein belongs to the argininosuccinate synthase family. Type 1 subfamily. In terms of assembly, homotetramer.

It is found in the cytoplasm. The enzyme catalyses L-citrulline + L-aspartate + ATP = 2-(N(omega)-L-arginino)succinate + AMP + diphosphate + H(+). It participates in amino-acid biosynthesis; L-arginine biosynthesis; L-arginine from L-ornithine and carbamoyl phosphate: step 2/3. This Staphylococcus saprophyticus subsp. saprophyticus (strain ATCC 15305 / DSM 20229 / NCIMB 8711 / NCTC 7292 / S-41) protein is Argininosuccinate synthase.